We begin with the raw amino-acid sequence, 434 residues long: Ribosomal protein uS12 methylthiotransferase RimO (434 aa).

One can recognise an MTTase N-terminal domain in the interval 4–122 (NRVDVITLGC…LISHLGKSYY (119 aa)). [4Fe-4S] cluster-binding residues include cysteine 13, cysteine 51, cysteine 85, cysteine 146, cysteine 150, and cysteine 153. A Radical SAM core domain is found at 132-363 (TTPRHYAYLK…MAVQERISAA (232 aa)). Positions 366-434 (EAKIGSRLHV…PFDLYARIVD (69 aa)) constitute a TRAM domain.

Belongs to the methylthiotransferase family. RimO subfamily. Requires [4Fe-4S] cluster as cofactor.

It localises to the cytoplasm. It catalyses the reaction L-aspartate(89)-[ribosomal protein uS12]-hydrogen + (sulfur carrier)-SH + AH2 + 2 S-adenosyl-L-methionine = 3-methylsulfanyl-L-aspartate(89)-[ribosomal protein uS12]-hydrogen + (sulfur carrier)-H + 5'-deoxyadenosine + L-methionine + A + S-adenosyl-L-homocysteine + 2 H(+). In terms of biological role, catalyzes the methylthiolation of an aspartic acid residue of ribosomal protein uS12. This chain is Ribosomal protein uS12 methylthiotransferase RimO, found in Porphyromonas gingivalis (strain ATCC BAA-308 / W83).